The following is a 317-amino-acid chain: MKPLKIIFAGTPDFAAQHLQALLNSHHQVIAVYTQPDKPAGRGKKLQASPVKQLAEQYNIPVYQPKSLRKEEAQAQFAQLQADVMVVVAYGLILPKAVLEMPRLGCLNVHGSILPRWRGAAPIQRAIWAGDKQTGVTIMQMDEGLDTGDMLHKVYCDITAEETSASLYHKLATLAPPALIDVLDELESGKFIAEKQEDSKSNYAEKLSKEEAKLDWSLSAAQLERNIRAFNPAPVAFLTVPVNEAEERIKVYRAEVLPHQNSAAGTVLAFDKKGLRIATAEGVLNIQQLQPSGKKPMSVQDFLNGRADWFVLGQVLN.

112–115 (SILP) contributes to the (6S)-5,6,7,8-tetrahydrofolate binding site.

Belongs to the Fmt family.

The catalysed reaction is L-methionyl-tRNA(fMet) + (6R)-10-formyltetrahydrofolate = N-formyl-L-methionyl-tRNA(fMet) + (6S)-5,6,7,8-tetrahydrofolate + H(+). Functionally, attaches a formyl group to the free amino group of methionyl-tRNA(fMet). The formyl group appears to play a dual role in the initiator identity of N-formylmethionyl-tRNA by promoting its recognition by IF2 and preventing the misappropriation of this tRNA by the elongation apparatus. The polypeptide is Methionyl-tRNA formyltransferase (Mannheimia succiniciproducens (strain KCTC 0769BP / MBEL55E)).